A 179-amino-acid chain; its full sequence is Coiled-coil domain-containing protein 32 (179 aa).

The disordered stretch occupies residues 36-65; the sequence is DNAFSDSFMDSHPAGESHTAAADSAVQPAG. A coiled-coil region spans residues 75 to 98; it reads EVYLASLEKKLRRIKGLNEEVTSK. Residues 158 to 179 form a disordered region; sequence LIPPESQAEKPEAGDKPAAAEQ.

In terms of assembly, interacts with AP2S1; the interaction is direct and mediates association with adaptor protein complex 2 (AP-2).

The protein resides in the membrane. It localises to the coated pit. Functionally, regulates clathrin-mediated endocytsois of cargos such as transferrin probably through the association and modulation of adaptor protein complex 2 (AP-2). Has a role in ciliogenesis. Required for proper cephalic and left/right axis development. The protein is Coiled-coil domain-containing protein 32 (Ccdc32) of Mus musculus (Mouse).